We begin with the raw amino-acid sequence, 162 residues long: Ribosomal RNA large subunit methyltransferase H (162 aa).

Residues leucine 78, glycine 109, and 128–133 (LSALTL) each bind S-adenosyl-L-methionine.

This sequence belongs to the RNA methyltransferase RlmH family. As to quaternary structure, homodimer.

It localises to the cytoplasm. It carries out the reaction pseudouridine(1915) in 23S rRNA + S-adenosyl-L-methionine = N(3)-methylpseudouridine(1915) in 23S rRNA + S-adenosyl-L-homocysteine + H(+). Specifically methylates the pseudouridine at position 1915 (m3Psi1915) in 23S rRNA. The polypeptide is Ribosomal RNA large subunit methyltransferase H (Psychrobacter arcticus (strain DSM 17307 / VKM B-2377 / 273-4)).